The chain runs to 388 residues: Acyl-CoA dehydrogenase fadE12 (388 aa).

The protein belongs to the acyl-CoA dehydrogenase family. FAD is required as a cofactor.

The enzyme catalyses a 2,3-saturated acyl-CoA + A = a 2,3-dehydroacyl-CoA + AH2. The sequence is that of Acyl-CoA dehydrogenase fadE12 (fadE12) from Mycobacterium tuberculosis (strain CDC 1551 / Oshkosh).